The primary structure comprises 347 residues: MTSVTVRPSATTLLEKHPNLRLRDILDTLPRSVYEINPLKAWSRVLLSVAAVVGCYALLAIAPWYLLLPVWFLTGTTLTGFFVIGHDCGHRSFSRKNWVNNLVGHLAFLPLIYPFHSWRILHNHHHRYTNNMDEDNAWAPFTPELYDDSPAFIKAVYRAIRGKLWWLASVIHQLKLHFNWFAFEGKQREQVRFSALFVIIAGAIAFPVMFYTLGVWGVVKFWLMPWLGYHFWMSTFTLVHHTVPEIPFSYRDKWNEAIAQLSGTVHCDYPKWVEVLCHDINVHVPHHLSTGIPSYNLRKAYASIKQNWGEYLYETKFSWELMKAITEQCHLYDAEHNYISFAQHQKR.

The next 2 membrane-spanning stretches (helical) occupy residues 41–63 (AWSR…AIAP) and 67–85 (LLPV…FVIG). The Histidine box-1 signature appears at 86-90 (HDCGH). Residues 98 to 118 (WVNNLVGHLAFLPLIYPFHSW) form a helical membrane-spanning segment. The short motif at 122–126 (HNHHH) is the Histidine box-2 element. Transmembrane regions (helical) follow at residues 164–184 (LWWL…FAFE), 196–216 (LFVI…LGVW), and 218–238 (VVKF…TFTL). Residues 286 to 290 (HHLST) carry the Histidine box-3 motif.

Belongs to the fatty acid desaturase type 2 family. Fe(2+) is required as a cofactor.

The protein localises to the membrane. It catalyses the reaction a 1-[(9Z)-octadecenoyl]-2-acyl-glycerolipid + 2 reduced [2Fe-2S]-[ferredoxin] + O2 + 2 H(+) = a 1-[(9Z,12Z)-octadecdienoyl]-2-acyl-glycerolipid + 2 oxidized [2Fe-2S]-[ferredoxin] + 2 H2O. Its pathway is lipid metabolism; polyunsaturated fatty acid biosynthesis. In terms of biological role, desaturase involved in fatty acid biosynthesis. Introduces a double bond at carbon 12 of oleoyl groups (18:1) attached to the sn-1 position of the glycerol moiety of membrane glycerolipids. Can also efficiently catalyze the desaturation of palmitoleic acid (16:1) in vitro. The protein is sn-1 oleoyl-lipid 12-desaturase of Picosynechococcus sp. (strain ATCC 27264 / PCC 7002 / PR-6) (Agmenellum quadruplicatum).